The chain runs to 66 residues: Cold shock protein CspB (66 aa).

A CSD domain is found at Gly-4 to Val-63.

Homodimer.

It localises to the cytoplasm. Functionally, affects cell viability at low temperatures. The polypeptide is Cold shock protein CspB (cspB) (Geobacillus stearothermophilus (Bacillus stearothermophilus)).